Consider the following 398-residue polypeptide: L-glutamine--4-(methylsulfanyl)-2-oxobutanoate aminotransferase (398 aa).

Lys-240 carries the post-translational modification N6-(pyridoxal phosphate)lysine.

Belongs to the class-I pyridoxal-phosphate-dependent aminotransferase family. MtnE subfamily. Requires pyridoxal 5'-phosphate as cofactor.

The catalysed reaction is 4-methylsulfanyl-2-oxobutanoate + L-glutamine = 2-oxoglutaramate + L-methionine. It functions in the pathway amino-acid biosynthesis; L-methionine biosynthesis via salvage pathway; L-methionine from S-methyl-5-thio-alpha-D-ribose 1-phosphate: step 6/6. Its function is as follows. Involved in the methylthioribose (MTR) recycling pathway. Catalyzes the formation of methionine from 2-keto-4-methylthiobutyrate (KMTB). This Bacillus subtilis (strain 168) protein is L-glutamine--4-(methylsulfanyl)-2-oxobutanoate aminotransferase.